The sequence spans 890 residues: Phosphatidate phosphatase LPIN1 (890 aa).

Positions 1-108 are N-LIP; sequence MNYVGQLAGQ…IPMHLATSPI (108 aa). Residues Ser106 and Ser150 each carry the phosphoserine modification. Disordered stretches follow at residues 125-183, 228-300, 365-392, and 421-456; these read VDRM…DMFP, SYPN…SSRK, KPPS…SRHL, and SGLA…STSD. The segment covering 152-161 has biased composition (basic residues); the sequence is VKKRRKRRRK. The Nuclear localization signal motif lies at 153–158; the sequence is KKRRKR. 2 stretches are compositionally biased toward basic and acidic residues: residues 162-172 and 252-265; these read SQLDSLKRDDN and SDSE…ERTG. Phosphoserine occurs at positions 252, 254, and 260. Thr264 carries the phosphothreonine modification. Ser294 bears the Phosphoserine mark. Lys425 is modified (N6-acetyllysine). Positions 431–440 are enriched in polar residues; it reads GARSANQSPQ. Residues Ser434, Ser438, and Ser449 each carry the phosphoserine modification. The segment covering 441-456 has biased composition (low complexity); sequence SVGSSGVDSGVESTSD. Lys565 participates in a covalent cross-link: Glycyl lysine isopeptide (Lys-Gly) (interchain with G-Cter in SUMO). The interval 566 to 616 is disordered; sequence EESKPEQCLAGKAHSTGEQPPQLSLATRVKHESSSSDEERAAAKPSNAGHL. Over residues 581-590 the composition is skewed to polar residues; sequence TGEQPPQLSL. The span at 594–607 shows a compositional bias: basic and acidic residues; it reads VKHESSSSDEERAA. Residue Lys595 is modified to N6-acetyllysine. A Glycyl lysine isopeptide (Lys-Gly) (interchain with G-Cter in SUMO) cross-link involves residue Lys595. Phosphoserine occurs at positions 600 and 601. The segment at 624–830 is C-LIP; it reads YKKTLRLTSE…VNPKGELVQE (207 aa). The short motif at 678–682 is the DXDXT motif element; that stretch reads DIDGT. An LXXIL motif motif is present at residues 689–693; the sequence is LGHIL. Residues Ser887 and Ser889 each carry the phosphoserine modification.

This sequence belongs to the lipin family. In terms of assembly, interacts (via LXXIL motif) with PPARA. Interacts with PPARGC1A. Interaction with PPARA and PPARGC1A leads to the formation of a complex that modulates gene transcription. Interacts with MEF2C. Mg(2+) is required as a cofactor. The cofactor is Mn(2+). Phosphorylated at multiple sites by mTOR in response to insulin, leading to its inactivation. Phosphorylation does not affect the catalytic activity but regulates the localization. Phosphorylation is decreased by epinephrine. Dephosphorylated by the CTDNEP1-CNEP1R1 complex. Dephosphorylation following mTOR inhibition promotes its activity. Post-translationally, acetylation at Lys-425 and Lys-595 by KAT5 in response to fatty acids promotes translocation to the endoplasmic reticulum and synthesis of diacylglycerol. In terms of processing, sumoylated. As to expression, specifically expressed in skeletal muscle. Also abundant in adipose tissue. Lower levels in some portions of the digestive tract.

It is found in the cytoplasm. The protein localises to the cytosol. Its subcellular location is the endoplasmic reticulum membrane. It localises to the nucleus membrane. It catalyses the reaction a 1,2-diacyl-sn-glycero-3-phosphate + H2O = a 1,2-diacyl-sn-glycerol + phosphate. The catalysed reaction is 1-octadecanoyl-2-(4Z,7Z,10Z,13Z,16Z,19Z-docosahexaenoyl)-sn-glycero-3-phosphate + H2O = 1-octadecanoyl-2-(4Z,7Z,10Z,13Z,16Z,19Z-docosahexaenoyl)-sn-glycerol + phosphate. It carries out the reaction 1-octadecanoyl-2-(5Z,8Z,11Z,14Z-eicosatetraenoyl)-sn-glycero-3-phosphate + H2O = 1-octadecanoyl-2-(5Z,8Z,11Z,14Z-eicosatetraenoyl)-sn-glycerol + phosphate. The enzyme catalyses 1-octadecanoyl-2-(9Z,12Z-octadecadienoyl)-sn-glycero-3-phosphate + H2O = 1-octadecanoyl-2-(9Z,12Z)-octadecadienoyl-sn-glycerol + phosphate. It catalyses the reaction 1-octadecanoyl-2-(9Z-octadecenoyl)-sn-glycero-3-phosphate + H2O = 1-octadecanoyl-2-(9Z-octadecenoyl)-sn-glycerol + phosphate. The catalysed reaction is 1-hexadecanoyl-2-(4Z,7Z,10Z,13Z,16Z,19Z-docosahexaenoyl)-sn-glycero-3-phosphate + H2O = 1-hexadecanoyl-2-(4Z,7Z,10Z,13Z,16Z,19Z-docosahexaenoyl)-sn-glycerol + phosphate. It carries out the reaction 1,2-dioctadecanoyl-sn-glycero-3-phosphate + H2O = 1,2-dioctadecanoyl-sn-glycerol + phosphate. The enzyme catalyses 1-hexadecanoyl-2-(5Z,8Z,11Z,14Z-eicosatetraenoyl)-sn-glycero-3-phosphate + H2O = 1-hexadecanoyl-2-(5Z,8Z,11Z,14Z-eicosatetraenoyl)-sn-glycerol + phosphate. It catalyses the reaction 1-hexadecanoyl-2-(9Z,12Z-octadecadienoyl)-sn-glycero-3-phosphate + H2O = 1-hexadecanoyl-2-(9Z,12Z-octadecadienoyl)-sn-glycerol + phosphate. The catalysed reaction is 1-hexadecanoyl-2-(9Z-octadecenoyl)-sn-glycero-3-phosphate + H2O = 1-hexadecanoyl-2-(9Z-octadecenoyl)-sn-glycerol + phosphate. It carries out the reaction 1,2-di-(4Z,7Z,10Z,13Z,16Z,19Z-docosahexaenoyl)-sn-glycero-3-phosphate + H2O = 1,2-di-(4Z,7Z,10Z,13Z,16Z,19Z-docosahexaenoyl)-sn-glycerol + phosphate. The enzyme catalyses 1,2-di-(5Z,8Z,11Z,14Z)-eicosatetraenoyl-sn-glycero-3-phosphate + H2O = 1,2-di-(5Z,8Z,11Z,14Z)-eicosatetraenoyl-sn-glycerol + phosphate. It catalyses the reaction 1,2-di-(9Z,12Z-octadecadienoyl)-sn-glycero-3-phosphate + H2O = 1,2-di-(9Z,12Z-octadecadienoyl)-sn-glycerol + phosphate. The catalysed reaction is 1,2-di-(9Z-octadecenoyl)-sn-glycero-3-phosphate + H2O = 1,2-di-(9Z-octadecenoyl)-sn-glycerol + phosphate. It carries out the reaction 1,2-dihexadecanoyl-sn-glycero-3-phosphate + H2O = 1,2-dihexadecanoyl-sn-glycerol + phosphate. Its activity is regulated as follows. Potently inhibited by sphingolipids, in particular, the sphingoid bases sphinganine and sphingosine and ceramide-1-phosphate. Inhibited by concentrations of Mg(2+) and Mn(2+) above their optimums and by Ca(2+), Zn(2+), N-ethylmaleimide and propranolol. Sertraline and propanolol inhibit activity in dose-dependent manners with IC(50) values of 103 uM and 226 uM, respectively. With respect to regulation, sertraline and propanolol inhibit activity in dose-dependent manners with IC(50) values of 108 uM and 271 uM, respectively. Its activity is regulated as follows. Sertraline and propanolol inhibit activity in dose-dependent manners with IC(50) values of 143 uM and 227 uM, respectively. In terms of biological role, acts as a magnesium-dependent phosphatidate phosphatase enzyme which catalyzes the conversion of phosphatidic acid to diacylglycerol during triglyceride, phosphatidylcholine and phosphatidylethanolamine biosynthesis and therefore controls the metabolism of fatty acids at different levels. Is involved in adipocyte differentiation. Recruited at the mitochondrion outer membrane and is involved in mitochondrial fission by converting phosphatidic acid to diacylglycerol. Acts also as nuclear transcriptional coactivator for PPARGC1A/PPARA regulatory pathway to modulate lipid metabolism gene expression. The chain is Phosphatidate phosphatase LPIN1 from Homo sapiens (Human).